Consider the following 429-residue polypeptide: Gamma-glutamyl phosphate reductase (429 aa).

This sequence belongs to the gamma-glutamyl phosphate reductase family.

Its subcellular location is the cytoplasm. It catalyses the reaction L-glutamate 5-semialdehyde + phosphate + NADP(+) = L-glutamyl 5-phosphate + NADPH + H(+). It functions in the pathway amino-acid biosynthesis; L-proline biosynthesis; L-glutamate 5-semialdehyde from L-glutamate: step 2/2. Catalyzes the NADPH-dependent reduction of L-glutamate 5-phosphate into L-glutamate 5-semialdehyde and phosphate. The product spontaneously undergoes cyclization to form 1-pyrroline-5-carboxylate. The protein is Gamma-glutamyl phosphate reductase of Bradyrhizobium sp. (strain ORS 278).